Here is a 309-residue protein sequence, read N- to C-terminus: Peptide methionine sulfoxide reductase MsrA/MsrB (309 aa).

The tract at residues 1 to 153 (MIYLAEGCFW…PNGYCHIDIN (153 aa)) is peptide methionine sulfoxide reductase A. Cys8 is an active-site residue. Positions 170–293 (ATEIKAKLSA…NSLSITFIPK (124 aa)) constitute a MsrB domain. Catalysis depends on Cys282, which acts as the Nucleophile.

It in the N-terminal section; belongs to the MsrA Met sulfoxide reductase family. This sequence in the C-terminal section; belongs to the MsrB Met sulfoxide reductase family.

The catalysed reaction is L-methionyl-[protein] + [thioredoxin]-disulfide + H2O = L-methionyl-(S)-S-oxide-[protein] + [thioredoxin]-dithiol. The enzyme catalyses [thioredoxin]-disulfide + L-methionine + H2O = L-methionine (S)-S-oxide + [thioredoxin]-dithiol. It catalyses the reaction L-methionyl-[protein] + [thioredoxin]-disulfide + H2O = L-methionyl-(R)-S-oxide-[protein] + [thioredoxin]-dithiol. Has an important function as a repair enzyme for proteins that have been inactivated by oxidation. Catalyzes the reversible oxidation-reduction of methionine sulfoxide in proteins to methionine. The polypeptide is Peptide methionine sulfoxide reductase MsrA/MsrB (msrAB) (Streptococcus pyogenes serotype M3 (strain ATCC BAA-595 / MGAS315)).